Reading from the N-terminus, the 119-residue chain is Promotilin (119 aa).

The signal sequence occupies residues 1-25 (MVSRKAVVVLLVVHAAAMLASHTEA). Positions 40–72 (EKERNKGQKKSLSVQQASEELGPLDPSEPTKEE) are disordered.

Belongs to the motilin family.

The protein localises to the secreted. In terms of biological role, plays an important role in the regulation of interdigestive gastrointestinal motility and indirectly causes rhythmic contraction of duodenal and colonic smooth muscle. This is Promotilin (MLN) from Sus scrofa (Pig).